The following is a 180-amino-acid chain: NADH-quinone oxidoreductase subunit I (180 aa).

2 consecutive 4Fe-4S ferredoxin-type domains span residues 44–74 (LNRY…VEGA) and 90–119 (RVYQ…MTTE). [4Fe-4S] cluster is bound by residues cysteine 54, cysteine 57, cysteine 60, cysteine 64, cysteine 99, cysteine 102, cysteine 105, and cysteine 109. Residues 145–180 (MQAPPHDMAPGKTDDDYYLGNVTPITPVPSGTEDAR) are disordered.

It belongs to the complex I 23 kDa subunit family. In terms of assembly, NDH-1 is composed of 14 different subunits. Subunits NuoA, H, J, K, L, M, N constitute the membrane sector of the complex. [4Fe-4S] cluster is required as a cofactor.

It localises to the cell membrane. The enzyme catalyses a quinone + NADH + 5 H(+)(in) = a quinol + NAD(+) + 4 H(+)(out). In terms of biological role, NDH-1 shuttles electrons from NADH, via FMN and iron-sulfur (Fe-S) centers, to quinones in the respiratory chain. The immediate electron acceptor for the enzyme in this species is believed to be menaquinone. Couples the redox reaction to proton translocation (for every two electrons transferred, four hydrogen ions are translocated across the cytoplasmic membrane), and thus conserves the redox energy in a proton gradient. This is NADH-quinone oxidoreductase subunit I from Mycolicibacterium smegmatis (strain ATCC 700084 / mc(2)155) (Mycobacterium smegmatis).